Here is a 405-residue protein sequence, read N- to C-terminus: Tryptophan synthase beta chain (405 aa).

N6-(pyridoxal phosphate)lysine is present on K95.

This sequence belongs to the TrpB family. As to quaternary structure, tetramer of two alpha and two beta chains. The cofactor is pyridoxal 5'-phosphate.

The enzyme catalyses (1S,2R)-1-C-(indol-3-yl)glycerol 3-phosphate + L-serine = D-glyceraldehyde 3-phosphate + L-tryptophan + H2O. It functions in the pathway amino-acid biosynthesis; L-tryptophan biosynthesis; L-tryptophan from chorismate: step 5/5. In terms of biological role, the beta subunit is responsible for the synthesis of L-tryptophan from indole and L-serine. The protein is Tryptophan synthase beta chain of Pseudomonas entomophila (strain L48).